A 308-amino-acid chain; its full sequence is MANIPKKTSLQKSSLSQVSRTREPFLKMIHAKESSPIYQTWTQREFLLPKETKEFPGFTLQDYHKLALKQPPCTELKSKVRHQVLYPSKDAAEHTWGFHTWLDVGRLPATFPTRPDVPYDSNVWRHLTHANAHRLPAAQPGIPPPSWMGPHSFLSFISASPIVVDLKRRKQIIVRTVKELKEVEKLKLRSELRAPPLDANGNILPPPNFKKYQYISTGGRLVPWGLQFLPNPIPNNICKSWPCPNHQPHYQEKVLKLARLPTVPLSKDLVKDYQALIKDRLALPVHYLSKARPAKTPEGKRKRRPGYV.

In terms of tissue distribution, expressed in Testis.

The polypeptide is Testis-expressed protein 52 (Mus musculus (Mouse)).